Here is a 224-residue protein sequence, read N- to C-terminus: Adenylate kinase (224 aa).

10-15 (GSGKST) is a binding site for ATP. The segment at 30–59 (SSGDLIRREIERKSSLGREMEAYLSRGDLI) is NMP. AMP is bound by residues Ser-31, Arg-36, 57–59 (DLI), 83–86 (GYPR), and Gln-90. The interval 124-161 (GRRICPNCGAVYHVKYNPPKVPGICDVCGSELIQRADD) is LID. An ATP-binding site is contributed by Arg-125. 2 residues coordinate Zn(2+): Cys-128 and Cys-131. Position 134 to 135 (134 to 135 (VY)) interacts with ATP. Zn(2+) is bound by residues Cys-148 and Cys-151. Arg-158 and Arg-169 together coordinate AMP. Residue Gly-197 participates in ATP binding.

It belongs to the adenylate kinase family. As to quaternary structure, monomer.

Its subcellular location is the cytoplasm. It carries out the reaction AMP + ATP = 2 ADP. It participates in purine metabolism; AMP biosynthesis via salvage pathway; AMP from ADP: step 1/1. Catalyzes the reversible transfer of the terminal phosphate group between ATP and AMP. Plays an important role in cellular energy homeostasis and in adenine nucleotide metabolism. This chain is Adenylate kinase, found in Thermococcus kodakarensis (strain ATCC BAA-918 / JCM 12380 / KOD1) (Pyrococcus kodakaraensis (strain KOD1)).